Here is a 184-residue protein sequence, read N- to C-terminus: 1,6-anhydro-N-acetylmuramyl-L-alanine amidase AmpD (184 aa).

The 142-residue stretch at 30–171 folds into the N-acetylmuramoyl-L-alanine amidase domain; sequence QDISLLVIHY…ISPKRKIDPG (142 aa). His-38 contacts Zn(2+). The active-site Proton acceptor is Glu-120. Zn(2+) is bound by residues His-159 and Asp-169.

It belongs to the N-acetylmuramoyl-L-alanine amidase 2 family. Zn(2+) serves as cofactor.

It localises to the cytoplasm. It carries out the reaction Hydrolyzes the link between N-acetylmuramoyl residues and L-amino acid residues in certain cell-wall glycopeptides.. In terms of biological role, involved in cell wall peptidoglycan recycling. Specifically cleaves the amide bond between the lactyl group of N-acetylmuramic acid and the alpha-amino group of the L-alanine in degradation products containing an anhydro N-acetylmuramyl moiety. The chain is 1,6-anhydro-N-acetylmuramyl-L-alanine amidase AmpD (ampD) from Haemophilus influenzae (strain ATCC 51907 / DSM 11121 / KW20 / Rd).